The chain runs to 93 residues: Large ribosomal subunit protein uL23 (93 aa).

The protein belongs to the universal ribosomal protein uL23 family. Part of the 50S ribosomal subunit. Contacts protein L29, and trigger factor when it is bound to the ribosome.

Functionally, one of the early assembly proteins it binds 23S rRNA. One of the proteins that surrounds the polypeptide exit tunnel on the outside of the ribosome. Forms the main docking site for trigger factor binding to the ribosome. The polypeptide is Large ribosomal subunit protein uL23 (Helicobacter pylori (strain P12)).